The sequence spans 768 residues: MAGCPKGSWKPRLRSVVLGAAQLIWLSALISELVNRKKVATWTYNYSTKAYSWNNSRAFCKRHFTDLVAIQNKNEIAHLNDVIPYVNSYYWIGIRKINNKWTWVGTNKTLTAEAENWADNEPNNKRNNQDCVEIYIKSNSAPGKWNDEPCFKRKRALCYTASCQDMSCNSQGERIETIGSYTCSCYPGFYGPECEYVQECGKFDIPQHVLMNCSHPLGDFSFSSQCTFSCPEGYDLNGPSEMQCLASGIWTNNPPQCKAVQCQSLEAPLHGTMDCTHPLAAFAYDSSCKFECQPGYRMRGSDILHCTDSGQWSEPLPTCEAIACEPLESPLHGSMDCFPSTGAFGYNSSCTFRCTEGFVLMGNDAIHCADLGQWTAPAPVCEALQCQEFPVPSKAQVSCSDPFGPLKYQSACSFSCDEGSLLVGASVIRCLATGHWSEAPPECQAVSCTPLLSPENGTMTCIQPLGHSNYKSTCQFMCDEGFYLSGPERLDCSPSGHWTGSPPMCEAIKCPEIFAPEQGSLDCSHVHGEFSVGSTCHFSCNEEFELLGSRNVECTVSGRWSAPPPTCKGVTSLPVPSVRCPALTTPGQGTMSCRHHLESFGPNTTCYFGCKTGFTLRGANSLRCGASGQWTAVTPVCRAVKCSELHMDTAVAMNCSNPWGNFSYGSTCAFHCPEGQSLNGSARTTCGEDGHWSDAMPTCQAGTLTIQEALTYLGGALASTSGLAVGGTLLALLRKRLRKKDDGKCPLNPHSHLGTYGVFTNAAYDPTP.

Residues 1–41 (MAGCPKGSWKPRLRSVVLGAAQLIWLSALISELVNRKKVAT) form the signal peptide. The Extracellular segment spans residues 42-709 (WTYNYSTKAY…QAGTLTIQEA (668 aa)). Residues Asn-45, Asn-54, and Asn-107 are each glycosylated (N-linked (GlcNAc...) asparagine). In terms of domain architecture, C-type lectin spans 58–158 (AFCKRHFTDL…PCFKRKRALC (101 aa)). 20 cysteine pairs are disulfide-bonded: Cys-60-Cys-158, Cys-131-Cys-150, Cys-168-Cys-183, Cys-185-Cys-194, Cys-200-Cys-244, Cys-230-Cys-257, Cys-262-Cys-306, Cys-292-Cys-319, Cys-324-Cys-368, Cys-354-Cys-381, Cys-386-Cys-430, Cys-416-Cys-443, Cys-448-Cys-492, Cys-478-Cys-505, Cys-510-Cys-554, Cys-540-Cys-567, Cys-580-Cys-624, Cys-610-Cys-637, Cys-642-Cys-686, and Cys-672-Cys-699. Ca(2+) contacts are provided by Glu-121, Asn-123, and Asn-124. Asn-123 contacts a carbohydrate. Positions 133 and 146 each coordinate a carbohydrate. 2 residues coordinate Ca(2+): Asn-146 and Asp-147. The EGF-like domain occupies 159–195 (YTASCQDMSCNSQGERIETIGSYTCSCYPGFYGPECE). 8 Sushi domains span residues 198 to 259 (QECG…QCKA), 260 to 321 (VQCQ…TCEA), 322 to 383 (IACE…VCEA), 384 to 445 (LQCQ…ECQA), 446 to 507 (VSCT…MCEA), 508 to 569 (IKCP…TCKG), 578 to 639 (VRCP…VCRA), and 640 to 701 (VKCS…TCQA). Residue Asn-212 is glycosylated (N-linked (GlcNAc...) asparagine). An N-linked (GlcNAc...) asparagine glycan is attached at Asn-347. Asn-456 carries N-linked (GlcNAc...) asparagine glycosylation. Asn-603 carries N-linked (GlcNAc...) asparagine glycosylation. 3 N-linked (GlcNAc...) asparagine glycosylation sites follow: Asn-654, Asn-661, and Asn-679. Residues 710 to 733 (LTYLGGALASTSGLAVGGTLLALL) form a helical membrane-spanning segment. Residues 734–768 (RKRLRKKDDGKCPLNPHSHLGTYGVFTNAAYDPTP) are Cytoplasmic-facing. A lipid anchor (S-palmitoyl cysteine; alternate) is attached at Cys-745. A lipid anchor (S-stearoyl cysteine; alternate) is attached at Cys-745. Residues 756–759 (YGVF) carry the Endocytosis signal motif. Residues 759–768 (FTNAAYDPTP) form an interaction with SNX17 region.

Belongs to the selectin/LECAM family. In terms of assembly, interacts with SNX17. Interacts with SELPLG/PSGL1 and PODXL2 and mediates neutrophil adhesion and leukocyte rolling. This interaction requires the sialyl-Lewis X epitope of SELPLG and PODXL2, and specific tyrosine sulfation on SELPLG. Interacts (via C-type lectin domain) with alpha-IIb/beta3 integrin ITGA2B:ITGB3 and alpha-V/beta-3 integrin ITGAV:ITGB3. Interacts with alpha5/beta1 integrin ITGA5:ITGB1 and alpha4/beta1 integrin ITGA4:ITGB. Not detected in the absence of exposure to lipopolysaccharide (LPS). Detected only after exposure to lipopolysaccharide (LPS) in the tissues examined: spleen, lung, brain, liver, heart, kidney, thymus and small intestine.

It is found in the cell membrane. Its function is as follows. Ca(2+)-dependent receptor for myeloid cells that binds to carbohydrates on neutrophils and monocytes. Mediates the interaction of activated endothelial cells or platelets with leukocytes. The ligand recognized is sialyl-Lewis X. Mediates rapid rolling of leukocyte rolling over vascular surfaces during the initial steps in inflammation through interaction with SELPLG. Mediates cell-cell interactions and cell adhesion via the interaction with integrin alpha-IIb/beta3 (ITGA2B:ITGB3) and integrin alpha-V/beta-3 (ITGAV:ITGB3). This is P-selectin (Selp) from Rattus norvegicus (Rat).